The chain runs to 483 residues: Probable cytosol aminopeptidase (483 aa).

Residues Lys-252 and Asp-257 each coordinate Mn(2+). Lys-264 is a catalytic residue. Residues Asp-275, Asp-334, and Glu-336 each contribute to the Mn(2+) site. The active site involves Arg-338.

The protein belongs to the peptidase M17 family. Mn(2+) serves as cofactor.

The protein localises to the cytoplasm. The enzyme catalyses Release of an N-terminal amino acid, Xaa-|-Yaa-, in which Xaa is preferably Leu, but may be other amino acids including Pro although not Arg or Lys, and Yaa may be Pro. Amino acid amides and methyl esters are also readily hydrolyzed, but rates on arylamides are exceedingly low.. The catalysed reaction is Release of an N-terminal amino acid, preferentially leucine, but not glutamic or aspartic acids.. Its function is as follows. Presumably involved in the processing and regular turnover of intracellular proteins. Catalyzes the removal of unsubstituted N-terminal amino acids from various peptides. The protein is Probable cytosol aminopeptidase of Legionella pneumophila (strain Corby).